Reading from the N-terminus, the 443-residue chain is ATP-dependent protease ATPase subunit HslU (443 aa).

Residues Ile-19 and Gly-61–Glu-66 each bind ATP. The segment at Pro-139–Val-158 is disordered. ATP-binding residues include Asp-256, Glu-321, and Arg-393.

It belongs to the ClpX chaperone family. HslU subfamily. As to quaternary structure, a double ring-shaped homohexamer of HslV is capped on each side by a ring-shaped HslU homohexamer. The assembly of the HslU/HslV complex is dependent on binding of ATP.

It localises to the cytoplasm. Its function is as follows. ATPase subunit of a proteasome-like degradation complex; this subunit has chaperone activity. The binding of ATP and its subsequent hydrolysis by HslU are essential for unfolding of protein substrates subsequently hydrolyzed by HslV. HslU recognizes the N-terminal part of its protein substrates and unfolds these before they are guided to HslV for hydrolysis. This is ATP-dependent protease ATPase subunit HslU from Cupriavidus taiwanensis (strain DSM 17343 / BCRC 17206 / CCUG 44338 / CIP 107171 / LMG 19424 / R1) (Ralstonia taiwanensis (strain LMG 19424)).